A 355-amino-acid polypeptide reads, in one-letter code: Holliday junction branch migration complex subunit RuvB (355 aa).

The tract at residues 4-190 (TDKLAAERII…FGIVARLEFY (187 aa)) is large ATPase domain (RuvB-L). ATP is bound by residues Leu29, Arg30, Gly71, Lys74, Thr75, Thr76, 137-139 (EDY), Arg180, Tyr190, and Arg227. Thr75 contributes to the Mg(2+) binding site. The small ATPAse domain (RuvB-S) stretch occupies residues 191–261 (DADQLARIVR…VADAALAMLD (71 aa)). The tract at residues 264-355 (PVGFDLMDRK…RGMWDTPAGK (92 aa)) is head domain (RuvB-H). Arg300, Arg319, and Arg324 together coordinate DNA.

The protein belongs to the RuvB family. Homohexamer. Forms an RuvA(8)-RuvB(12)-Holliday junction (HJ) complex. HJ DNA is sandwiched between 2 RuvA tetramers; dsDNA enters through RuvA and exits via RuvB. An RuvB hexamer assembles on each DNA strand where it exits the tetramer. Each RuvB hexamer is contacted by two RuvA subunits (via domain III) on 2 adjacent RuvB subunits; this complex drives branch migration. In the full resolvosome a probable DNA-RuvA(4)-RuvB(12)-RuvC(2) complex forms which resolves the HJ.

Its subcellular location is the cytoplasm. It catalyses the reaction ATP + H2O = ADP + phosphate + H(+). The RuvA-RuvB-RuvC complex processes Holliday junction (HJ) DNA during genetic recombination and DNA repair, while the RuvA-RuvB complex plays an important role in the rescue of blocked DNA replication forks via replication fork reversal (RFR). RuvA specifically binds to HJ cruciform DNA, conferring on it an open structure. The RuvB hexamer acts as an ATP-dependent pump, pulling dsDNA into and through the RuvAB complex. RuvB forms 2 homohexamers on either side of HJ DNA bound by 1 or 2 RuvA tetramers; 4 subunits per hexamer contact DNA at a time. Coordinated motions by a converter formed by DNA-disengaged RuvB subunits stimulates ATP hydrolysis and nucleotide exchange. Immobilization of the converter enables RuvB to convert the ATP-contained energy into a lever motion, pulling 2 nucleotides of DNA out of the RuvA tetramer per ATP hydrolyzed, thus driving DNA branch migration. The RuvB motors rotate together with the DNA substrate, which together with the progressing nucleotide cycle form the mechanistic basis for DNA recombination by continuous HJ branch migration. Branch migration allows RuvC to scan DNA until it finds its consensus sequence, where it cleaves and resolves cruciform DNA. The protein is Holliday junction branch migration complex subunit RuvB of Burkholderia ambifaria (strain ATCC BAA-244 / DSM 16087 / CCUG 44356 / LMG 19182 / AMMD) (Burkholderia cepacia (strain AMMD)).